A 218-amino-acid chain; its full sequence is tRNA (guanine-N(7)-)-methyltransferase (218 aa).

S-adenosyl-L-methionine contacts are provided by Glu-43, Asp-68, Glu-101, and Asn-124. The substrate site is built by Lys-128 and Asp-160.

The protein belongs to the class I-like SAM-binding methyltransferase superfamily. TrmB family.

It carries out the reaction guanosine(46) in tRNA + S-adenosyl-L-methionine = N(7)-methylguanosine(46) in tRNA + S-adenosyl-L-homocysteine. Its pathway is tRNA modification; N(7)-methylguanine-tRNA biosynthesis. Its function is as follows. Catalyzes the formation of N(7)-methylguanine at position 46 (m7G46) in tRNA. This is tRNA (guanine-N(7)-)-methyltransferase from Acetivibrio thermocellus (strain ATCC 27405 / DSM 1237 / JCM 9322 / NBRC 103400 / NCIMB 10682 / NRRL B-4536 / VPI 7372) (Clostridium thermocellum).